The following is a 298-amino-acid chain: Tyrosine recombinase XerC (298 aa).

The region spanning threonine 2 to valine 88 is the Core-binding (CB) domain. The Tyr recombinase domain occupies histidine 109–aspartate 288. Catalysis depends on residues arginine 148, lysine 172, histidine 240, arginine 243, and histidine 266. The active-site O-(3'-phospho-DNA)-tyrosine intermediate is the tyrosine 275.

Belongs to the 'phage' integrase family. XerC subfamily. Forms a cyclic heterotetrameric complex composed of two molecules of XerC and two molecules of XerD, in which XerC interacts with XerD via its C-terminal region, XerD interacts with XerC via its C-terminal region and so on.

The protein resides in the cytoplasm. With respect to regulation, ftsK may regulate the catalytic switch between XerC and XerD in the heterotetrameric complex during the two steps of the recombination process. In terms of biological role, site-specific tyrosine recombinase, which acts by catalyzing the cutting and rejoining of the recombining DNA molecules. Binds cooperatively to specific DNA consensus sequences that are separated from XerD binding sites by a short central region, forming the heterotetrameric XerC-XerD complex that recombines DNA substrates. The complex is essential to convert dimers of the bacterial chromosome into monomers to permit their segregation at cell division. It also contributes to the segregational stability of plasmids. In the complex XerC specifically exchanges the top DNA strands. In Escherichia coli O6:K15:H31 (strain 536 / UPEC), this protein is Tyrosine recombinase XerC.